The following is a 322-amino-acid chain: tRNA-dihydrouridine(16) synthase (322 aa).

Residues 7 to 9 (PME) and Gln68 contribute to the FMN site. Cys98 functions as the Proton donor in the catalytic mechanism. FMN contacts are provided by residues Lys139, 200-202 (NGE), and 224-225 (CR).

It belongs to the Dus family. DusC subfamily. Requires FMN as cofactor.

The catalysed reaction is 5,6-dihydrouridine(16) in tRNA + NADP(+) = uridine(16) in tRNA + NADPH + H(+). It carries out the reaction 5,6-dihydrouridine(16) in tRNA + NAD(+) = uridine(16) in tRNA + NADH + H(+). In terms of biological role, catalyzes the synthesis of 5,6-dihydrouridine (D), a modified base found in the D-loop of most tRNAs, via the reduction of the C5-C6 double bond in target uridines. Specifically modifies U16 in tRNAs. The sequence is that of tRNA-dihydrouridine(16) synthase from Vibrio parahaemolyticus serotype O3:K6 (strain RIMD 2210633).